Reading from the N-terminus, the 590-residue chain is Hyaluronan synthase 1 (590 aa).

The Cytoplasmic portion of the chain corresponds to 1–31 (MKDKAAATMEIPEDPGIPKNLERKRPIVWRM). Residues 32-52 (IYYSFAVLLLAAFTAAYVTEF) traverse the membrane as a helical segment. Topologically, residues 53 to 60 (QILTHEDV) are extracellular. The chain crosses the membrane as a helical span at residues 61–81 (LFSLGLYGLVMFLHLMMQSLF). Over 82 to 401 (AYLEIRRINK…YNAQWWYKHH (320 aa)) the chain is Cytoplasmic. Residues 402-422 (IWMTYESVVHFIFPFFITATV) traverse the membrane as a helical segment. At 423-425 (IRL) the chain is on the extracellular side. The chain crosses the membrane as a helical span at residues 426–446 (LYASTIWNVVWLLLCIQIMSV). At 447-456 (LKSLYACWLR) the chain is on the cytoplasmic side. Residues 457–477 (GNPIMLLMSLYSMLYMTGLLP) traverse the membrane as a helical segment. At 478–505 (SKYFAMLTINKSGWGTSGRKKIVGNYMP) the chain is on the extracellular side. The chain crosses the membrane as a helical span at residues 506 to 526 (VLPLSIWMAVLCGGVGYSIYM). The Cytoplasmic portion of the chain corresponds to 527–543 (DCHQDWSTPEKQKELYH). The helical transmembrane segment at 544 to 564 (LLYGCISYTLYWVLMALMYWV) threads the bilayer. Residues 565–588 (WVKRCCRKRSQTVTLVHDIPERLV) lie on the Extracellular side of the membrane.

Belongs to the NodC/HAS family. The cofactor is Mg(2+).

It is found in the membrane. The catalysed reaction is [hyaluronan](n) + UDP-N-acetyl-alpha-D-glucosamine = N-acetyl-beta-D-glucosaminyl-(1-&gt;4)-[hyaluronan](n) + UDP + H(+). The enzyme catalyses N-acetyl-beta-D-glucosaminyl-(1-&gt;4)-[hyaluronan](n) + UDP-alpha-D-glucuronate = [hyaluronan](n+1) + UDP + H(+). Its pathway is glycan biosynthesis; hyaluronan biosynthesis. Catalyzes the addition of GlcNAc or GlcUA monosaccharides to the nascent hyaluronan polymer. Therefore, it is essential to hyaluronan synthesis a major component of most extracellular matrices that has a structural role in tissues architectures and regulates cell adhesion, migration and differentiation. Also able to catalyze the synthesis of chito-oligosaccharide depending on the substrate. This is Hyaluronan synthase 1 (has1) from Xenopus tropicalis (Western clawed frog).